Consider the following 821-residue polypeptide: Ent-isokaur-15-ene synthase (821 aa).

Residues D556, D560, N701, T705, and E709 each contribute to the Mg(2+) site. Positions 556 to 560 (DDFFD) match the DDXXD motif motif.

It belongs to the terpene synthase family. The cofactor is Mg(2+).

It catalyses the reaction ent-copalyl diphosphate = ent-isokaurene + diphosphate. It functions in the pathway secondary metabolite biosynthesis; terpenoid biosynthesis. In terms of biological role, involved in the biosynthesis of ent-kaurene diterpenoids natural products. Catalyzes the conversion of ent-copalyl diphosphate to the phytoalexin precursor ent-isokaur-15-ene. The chain is Ent-isokaur-15-ene synthase from Oryza sativa subsp. indica (Rice).